A 290-amino-acid chain; its full sequence is Porphobilinogen deaminase (290 aa).

Cys-237 is modified (S-(dipyrrolylmethanemethyl)cysteine).

The protein belongs to the HMBS family. In terms of assembly, monomer. Dipyrromethane serves as cofactor.

The enzyme catalyses 4 porphobilinogen + H2O = hydroxymethylbilane + 4 NH4(+). The protein operates within porphyrin-containing compound metabolism; protoporphyrin-IX biosynthesis; coproporphyrinogen-III from 5-aminolevulinate: step 2/4. Tetrapolymerization of the monopyrrole PBG into the hydroxymethylbilane pre-uroporphyrinogen in several discrete steps. In Clostridium botulinum (strain Kyoto / Type A2), this protein is Porphobilinogen deaminase.